Consider the following 476-residue polypeptide: MRPGTSITPLSLTRRLGLFFALVLSIALASMGAFAYYSLAAQLEARDDEVVKGKLEQVEHFLREVDGVQGVPAAQHRFDDLVRGYSDLIVRVTALDGRLLFRTGNDALLEGTDQAAVTGKSSLMFQSADAVLGRDGTRATVFVAKSGEDRKQVTARFRTTLVLGTTVGVILTALVGAAITRRELEPAHVLIKQINRISVERLSYRVDMPPKPTEVRDIASAFNAMLQRLEDGYQKLSRFSADLAHDLRTPLNNLIGHAEVALSRDRTGPEYVALVEESLVEYQRLARMIDAMLFLARADSANVALELTELQLNAELRKLSAYFSVLAEERSVVIRVSGDATLVADAILFQRAINNVLSNAVRHAWPNSMIDLVVRREAAHCCIDITNVGDPIPERELSLIFDRFFRGDRARSNSSQSTGLGLAIVLSIMELHGGDASAVSGLDGKTRFTLRFPLNGAEASARVSVGRPSQDRPVVG.

A signal peptide spans 1 to 35; sequence MRPGTSITPLSLTRRLGLFFALVLSIALASMGAFA. The Periplasmic segment spans residues 37–158; sequence YSLAAQLEAR…DRKQVTARFR (122 aa). A helical transmembrane segment spans residues 159 to 179; sequence TTLVLGTTVGVILTALVGAAI. The Cytoplasmic segment spans residues 180–476; the sequence is TRRELEPAHV…RPSQDRPVVG (297 aa). Residues 181 to 234 enclose the HAMP domain; the sequence is RRELEPAHVLIKQINRISVERLSYRVDMPPKPTEVRDIASAFNAMLQRLEDGYQ. Positions 242–455 constitute a Histidine kinase domain; that stretch reads DLAHDLRTPL…TRFTLRFPLN (214 aa). The residue at position 245 (His245) is a Phosphohistidine; by autocatalysis.

It localises to the cell inner membrane. It catalyses the reaction ATP + protein L-histidine = ADP + protein N-phospho-L-histidine.. In terms of biological role, member of the two-component regulatory system CzcS/CzcR involved in the control of cobalt, zinc and cadmium homeostasis. Probably activates CzcR by phosphorylation. The sequence is that of Sensor protein CzcS (czcS) from Cupriavidus metallidurans (strain ATCC 43123 / DSM 2839 / NBRC 102507 / CH34) (Ralstonia metallidurans).